Consider the following 449-residue polypeptide: HSPB1-associated protein 1 homolog (449 aa).

Residues 102 to 266 enclose the JmjC domain; that stretch reads WAYADYKYIA…DEARVAEALT (165 aa). Over residues 385–395 the composition is skewed to basic and acidic residues; sequence DQDKLRSDNKL. Positions 385–416 are disordered; that stretch reads DQDKLRSDNKLGQRSGQSVLQDTENPGGSGEM. Positions 396–410 are enriched in polar residues; that stretch reads GQRSGQSVLQDTENP.

It is found in the cytoplasm. Functionally, may play a role in cellular stress response. The protein is HSPB1-associated protein 1 homolog (hspbap1) of Danio rerio (Zebrafish).